Reading from the N-terminus, the 167-residue chain is Photosystem I assembly protein Ycf3 (167 aa).

TPR repeat units lie at residues 35 to 68 (AFTY…EIDP), 72 to 105 (SYIL…NPSL), and 120 to 153 (GEQA…APSN).

It belongs to the Ycf3 family.

The protein localises to the plastid. The protein resides in the chloroplast thylakoid membrane. In terms of biological role, essential for the assembly of the photosystem I (PSI) complex. May act as a chaperone-like factor to guide the assembly of the PSI subunits. In Marchantia polymorpha (Common liverwort), this protein is Photosystem I assembly protein Ycf3.